Here is a 159-residue protein sequence, read N- to C-terminus: Photosystem I reaction center subunit XI (159 aa).

3 helical membrane-spanning segments follow: residues 53 to 73 (LEIG…LGPL), 84 to 104 (LISG…YGIV), and 125 to 145 (FTAG…TLLE).

The protein belongs to the PsaL family.

Its subcellular location is the cellular thylakoid membrane. The polypeptide is Photosystem I reaction center subunit XI (Cyanothece sp. (strain PCC 7425 / ATCC 29141)).